A 355-amino-acid chain; its full sequence is S-adenosylmethionine:tRNA ribosyltransferase-isomerase (355 aa).

This sequence belongs to the QueA family. As to quaternary structure, monomer.

The protein resides in the cytoplasm. It carries out the reaction 7-aminomethyl-7-carbaguanosine(34) in tRNA + S-adenosyl-L-methionine = epoxyqueuosine(34) in tRNA + adenine + L-methionine + 2 H(+). It participates in tRNA modification; tRNA-queuosine biosynthesis. Transfers and isomerizes the ribose moiety from AdoMet to the 7-aminomethyl group of 7-deazaguanine (preQ1-tRNA) to give epoxyqueuosine (oQ-tRNA). The protein is S-adenosylmethionine:tRNA ribosyltransferase-isomerase of Gluconacetobacter diazotrophicus (strain ATCC 49037 / DSM 5601 / CCUG 37298 / CIP 103539 / LMG 7603 / PAl5).